The following is a 312-amino-acid chain: Short-chain dehydrogenase/reductase pkfC (312 aa).

Residues Lys56, Asn108, and Lys140 each contribute to the NADP(+) site. The active-site Proton donor is Ser164. Residues Tyr193 and Lys197 each contribute to the NADP(+) site. The active-site Proton acceptor is the Tyr193. The active-site Lowers pKa of active site Tyr is Lys197.

It belongs to the short-chain dehydrogenases/reductases (SDR) family.

It functions in the pathway secondary metabolite biosynthesis. Its function is as follows. Short-chain dehydrogenase/reductase; part of the gene cluster that mediates the biosynthesis of aspernidine A, a prenylated isoindolinone. The starting point of the biosynthesis of aspernidin A is the production of orsellinaldehyde by the non-reducing polyketide synthase pkfA. Hydroxylation, methylation of one of the phenol groups, and prenylation, presumably catalyzed by the prenyltransferase pkfE, would be needed to yield aspernidine D. Subsequently, the cytochrome P450 monooxygenase pkfB is responsible for hydroxylation of aspernidine D to yield aspernidine E. The dehydrogenase pkfF may be responsible for further oxidation of aspernidine E to form a dialdehyde intermediate which is further transformed in a series of steps, some of which are enzyme-mediated, to generate aspernidine A. The possibility that additional enzymes outside of the cluster are involved in aspernidine A biosynthesis cannot be excluded. The protein is Short-chain dehydrogenase/reductase pkfC of Emericella nidulans (strain FGSC A4 / ATCC 38163 / CBS 112.46 / NRRL 194 / M139) (Aspergillus nidulans).